The following is a 153-amino-acid chain: NAD(P)H-quinone oxidoreductase subunit N (153 aa).

This sequence belongs to the complex I NdhN subunit family. NDH-1 can be composed of about 15 different subunits; different subcomplexes with different compositions have been identified which probably have different functions.

Its subcellular location is the cellular thylakoid membrane. It carries out the reaction a plastoquinone + NADH + (n+1) H(+)(in) = a plastoquinol + NAD(+) + n H(+)(out). The catalysed reaction is a plastoquinone + NADPH + (n+1) H(+)(in) = a plastoquinol + NADP(+) + n H(+)(out). NDH-1 shuttles electrons from an unknown electron donor, via FMN and iron-sulfur (Fe-S) centers, to quinones in the respiratory and/or the photosynthetic chain. The immediate electron acceptor for the enzyme in this species is believed to be plastoquinone. Couples the redox reaction to proton translocation, and thus conserves the redox energy in a proton gradient. Cyanobacterial NDH-1 also plays a role in inorganic carbon-concentration. This Synechococcus sp. (strain WH7803) protein is NAD(P)H-quinone oxidoreductase subunit N.